A 662-amino-acid polypeptide reads, in one-letter code: Bifunctional polymyxin resistance protein ArnA (662 aa).

The formyltransferase ArnAFT stretch occupies residues 1-307 (MTSKAVVFAY…ELGLVEGARL (307 aa)). The Proton donor; for formyltransferase activity role is filled by H106. Residues R116 and 138–142 (IERAD) contribute to the (6R)-10-formyltetrahydrofolate site. The dehydrogenase ArnADH stretch occupies residues 316–662 (RRTRVLILGV…EALREREAQA (347 aa)). NAD(+) is bound by residues D349 and 370–371 (DI). Residues A395, Y400, and 434-435 (TS) contribute to the UDP-alpha-D-glucuronate site. E436 functions as the Proton acceptor; for decarboxylase activity in the catalytic mechanism. UDP-alpha-D-glucuronate is bound by residues R462, N493, 527-536 (RLVDGGAQKR), and Y614. R620 acts as the Proton donor; for decarboxylase activity in catalysis.

The protein in the N-terminal section; belongs to the Fmt family. UDP-L-Ara4N formyltransferase subfamily. In the C-terminal section; belongs to the NAD(P)-dependent epimerase/dehydratase family. UDP-glucuronic acid decarboxylase subfamily. Homohexamer, formed by a dimer of trimers.

The catalysed reaction is UDP-alpha-D-glucuronate + NAD(+) = UDP-beta-L-threo-pentopyranos-4-ulose + CO2 + NADH. The enzyme catalyses UDP-4-amino-4-deoxy-beta-L-arabinose + (6R)-10-formyltetrahydrofolate = UDP-4-deoxy-4-formamido-beta-L-arabinose + (6S)-5,6,7,8-tetrahydrofolate + H(+). It participates in nucleotide-sugar biosynthesis; UDP-4-deoxy-4-formamido-beta-L-arabinose biosynthesis; UDP-4-deoxy-4-formamido-beta-L-arabinose from UDP-alpha-D-glucuronate: step 1/3. It functions in the pathway nucleotide-sugar biosynthesis; UDP-4-deoxy-4-formamido-beta-L-arabinose biosynthesis; UDP-4-deoxy-4-formamido-beta-L-arabinose from UDP-alpha-D-glucuronate: step 3/3. Its pathway is bacterial outer membrane biogenesis; lipopolysaccharide biosynthesis. Functionally, bifunctional enzyme that catalyzes the oxidative decarboxylation of UDP-glucuronic acid (UDP-GlcUA) to UDP-4-keto-arabinose (UDP-Ara4O) and the addition of a formyl group to UDP-4-amino-4-deoxy-L-arabinose (UDP-L-Ara4N) to form UDP-L-4-formamido-arabinose (UDP-L-Ara4FN). The modified arabinose is attached to lipid A and is required for resistance to polymyxin and cationic antimicrobial peptides. The sequence is that of Bifunctional polymyxin resistance protein ArnA from Pseudomonas aeruginosa (strain UCBPP-PA14).